Reading from the N-terminus, the 372-residue chain is F-box/kelch-repeat protein At5g48990 (372 aa).

The region spanning 14 to 60 (SSPNPSLPEDLIVSILARVSRSYYTNLSVVSKTFRSILTSPELYKTR) is the F-box domain. Residues 176–222 (RTYFPGSSEKPDSLNCVEVYNTNTQTWNPVPPQKRKLKFGNMEGKIY) form a Kelch repeat.

The sequence is that of F-box/kelch-repeat protein At5g48990 from Arabidopsis thaliana (Mouse-ear cress).